The chain runs to 89 residues: Putative membrane protein insertion efficiency factor (89 aa).

Residues 69 to 89 are disordered; that stretch reads DPVPPAHTERGGTMCPSRLPE.

Belongs to the UPF0161 family.

The protein localises to the cell inner membrane. Could be involved in insertion of integral membrane proteins into the membrane. This is Putative membrane protein insertion efficiency factor from Paramagnetospirillum magneticum (strain ATCC 700264 / AMB-1) (Magnetospirillum magneticum).